Here is a 258-residue protein sequence, read N- to C-terminus: 4-hydroxy-tetrahydrodipicolinate reductase (258 aa).

NAD(+)-binding positions include 8 to 13 (GGSGKM), 86 to 88 (GTT), and 110 to 113 (ATNM). Histidine 142 functions as the Proton donor/acceptor in the catalytic mechanism. A (S)-2,3,4,5-tetrahydrodipicolinate-binding site is contributed by histidine 143. The active-site Proton donor is the lysine 146. 152–153 (GT) serves as a coordination point for (S)-2,3,4,5-tetrahydrodipicolinate.

It belongs to the DapB family.

It localises to the cytoplasm. It catalyses the reaction (S)-2,3,4,5-tetrahydrodipicolinate + NAD(+) + H2O = (2S,4S)-4-hydroxy-2,3,4,5-tetrahydrodipicolinate + NADH + H(+). The catalysed reaction is (S)-2,3,4,5-tetrahydrodipicolinate + NADP(+) + H2O = (2S,4S)-4-hydroxy-2,3,4,5-tetrahydrodipicolinate + NADPH + H(+). It participates in amino-acid biosynthesis; L-lysine biosynthesis via DAP pathway; (S)-tetrahydrodipicolinate from L-aspartate: step 4/4. Functionally, catalyzes the conversion of 4-hydroxy-tetrahydrodipicolinate (HTPA) to tetrahydrodipicolinate. This Campylobacter hominis (strain ATCC BAA-381 / DSM 21671 / CCUG 45161 / LMG 19568 / NCTC 13146 / CH001A) protein is 4-hydroxy-tetrahydrodipicolinate reductase.